We begin with the raw amino-acid sequence, 440 residues long: Enolase 1-2 (440 aa).

Substrate-binding residues include His-160 and Glu-169. Glu-212 (proton donor) is an active-site residue. Mg(2+) contacts are provided by Asp-247, Glu-296, and Asp-321. Substrate is bound by residues Glu-296 and Asp-321. Lys-346 (proton acceptor) is an active-site residue. Substrate-binding positions include 373–376 and Lys-397; that span reads SHRS.

This sequence belongs to the enolase family. As to quaternary structure, homodimer. The cofactor is Mg(2+).

It localises to the cytoplasm. The enzyme catalyses (2R)-2-phosphoglycerate = phosphoenolpyruvate + H2O. Its pathway is carbohydrate degradation; glycolysis; pyruvate from D-glyceraldehyde 3-phosphate: step 4/5. In Schizosaccharomyces pombe (strain 972 / ATCC 24843) (Fission yeast), this protein is Enolase 1-2 (eno102).